The chain runs to 132 residues: UPF0299 membrane protein YohJ (132 aa).

The next 4 helical transmembrane spans lie at 7-27, 31-51, 63-83, and 93-113; these read IIWQ…AGIF, LLPV…VLLA, GCYV…VGVM, and FGPV…VMSW.

It belongs to the UPF0299 family.

It is found in the cell inner membrane. The chain is UPF0299 membrane protein YohJ from Shigella dysenteriae serotype 1 (strain Sd197).